The primary structure comprises 2326 residues: Telomere-associated protein RIF1 (2326 aa).

Disordered stretches follow at residues Q381–T410, Y1105–P1965, and V1993–L2050. Residues G382–P396 show a composition bias toward polar residues. Composition is skewed to basic and acidic residues over residues S1112–K1126 and C1150–R1182. Residues S1216–S1225 show a composition bias toward low complexity. Composition is skewed to polar residues over residues Q1233 to I1242 and S1252 to A1270. A compositionally biased stretch (basic and acidic residues) spans K1290 to S1299. Composition is skewed to polar residues over residues M1318 to S1332 and S1341 to S1353. Residues P1376–T1402 show a composition bias toward basic and acidic residues. Residues P1403–Q1412 show a composition bias toward polar residues. 3 stretches are compositionally biased toward basic and acidic residues: residues Q1448 to Q1480, A1489 to S1511, and G1519 to S1539. Residues S1564–E1573 show a composition bias toward polar residues. Residues S1586 to K1595 are compositionally biased toward basic residues. Over residues N1596–Q1609 the composition is skewed to basic and acidic residues. 2 stretches are compositionally biased toward polar residues: residues P1610–S1640 and R1671–Q1683. Positions R1697–E1712 are enriched in basic and acidic residues. The segment covering K1713 to D1745 has biased composition (polar residues). A compositionally biased stretch (basic and acidic residues) spans S1776–I1785. Residues A1795–I1813 show a composition bias toward polar residues. Basic and acidic residues-rich tracts occupy residues V1869–E1884, S1908–M1925, and D1932–A1954. Over residues S2009 to I2036 the composition is skewed to polar residues.

It belongs to the RIF1 family. In terms of assembly, interacts with TP53BP1 (when phosphorylated by ATM).

The protein resides in the nucleus. The protein localises to the chromosome. It localises to the telomere. It is found in the cytoplasm. Its subcellular location is the cytoskeleton. The protein resides in the spindle. In terms of biological role, key regulator of TP53BP1 that plays a key role in the repair of double-strand DNA breaks (DSBs) in response to DNA damage: acts by promoting non-homologous end joining (NHEJ)-mediated repair of DSBs. In response to DNA damage, interacts with ATM-phosphorylated TP53BP1, allowing recruitment to DNA DSBs. Once recruited to DSBs, RIF1 and TP53BP1 act by promoting NHEJ-mediated repair of DSBs. In the same time, RIF1 and TP53BP1 specifically counteract DSBs resection via homologous recombination (HR) during G1 phase. This Gallus gallus (Chicken) protein is Telomere-associated protein RIF1.